Here is a 286-residue protein sequence, read N- to C-terminus: CLA biosynthesis dehydrogenase/reductase (286 aa).

NAD(+)-binding residues include Asp-37, Asp-63, Val-64, Asn-90, Tyr-156, and Lys-160. The Proton acceptor role is filled by Tyr-156.

The protein belongs to the short-chain dehydrogenases/reductases (SDR) family.

It is found in the cytoplasm. It carries out the reaction (10S)-hydroxy-(12Z)-octadecenoate + NAD(+) = 10-oxo-(12Z)-octadecenoate + NADH + H(+). The catalysed reaction is 10-oxo-(11E)-octadecenoate + NADH + H(+) = 10-hydroxy-(11E)-octadecenoate + NAD(+). The enzyme catalyses 10-oxooctadecanoate + NADH + H(+) = 10-hydroxyoctadecanoate + NAD(+). Its pathway is lipid metabolism; fatty acid metabolism. Is involved in a saturation metabolic pathway of polyunsaturated fatty acids, that detoxifies unsaturated fatty acids and generates hydroxy fatty acids, oxo fatty acids, conjugated fatty acids such as conjugated linoleic acids (CLAs), and partially saturated trans-fatty acids as intermediates. CLA-DH catalyzes the dehydrogenation/reduction steps in the production of 10-oxo-(12Z)-octadecenoate, 10-hydroxy-(11E)-octadecenoate and 10-hydroxyoctadecanoate during linoleate metabolism. As part of the gut microbiome, this enzyme modifies host fatty acid composition and is expected to improve human health by altering lipid metabolism related to the onset of metabolic syndrome. This chain is CLA biosynthesis dehydrogenase/reductase, found in Lactiplantibacillus plantarum (Lactobacillus plantarum).